The chain runs to 245 residues: Probable phosphatase CKO_02035 (245 aa).

Zn(2+) contacts are provided by His7, His9, His15, His40, Glu73, His101, His131, Asp192, and His194.

Belongs to the PHP family. In terms of assembly, homotrimer. It depends on Zn(2+) as a cofactor.

This chain is Probable phosphatase CKO_02035, found in Citrobacter koseri (strain ATCC BAA-895 / CDC 4225-83 / SGSC4696).